The following is a 345-amino-acid chain: Serpentine receptor class beta-5 (345 aa).

Residues 1–22 (MAEINQTKCDLAFQISYHPIYR) lie on the Extracellular side of the membrane. A glycan (N-linked (GlcNAc...) asparagine) is linked at Asn5. Residues 23–43 (LAQFWTLSVSLLAVPSLLYFL) traverse the membrane as a helical segment. The Cytoplasmic portion of the chain corresponds to 44–57 (LKRVLLLPFHGNLK). Residues 58–78 (CLLITYFSSIFLYALVLCFDF) form a helical membrane-spanning segment. Topologically, residues 79–103 (SYQCLIPFIVTTKCSLIIDQTLYKC) are extracellular. The helical transmembrane segment at 104–124 (GHMTSLFFLTTPMLLPFGFSI) threads the bilayer. The Cytoplasmic portion of the chain corresponds to 125-142 (ERFVAVGMAYKYEKMRTL). The helical transmembrane segment at 143-163 (LGPILCFILVAPNFVVFYFLF) threads the bilayer. The Extracellular portion of the chain corresponds to 164-189 (RDEQFTDSFISFLVLPNTPAVQFNNY). The chain crosses the membrane as a helical span at residues 190–210 (LWFLLYAKIGNFCCNCVLLIF). The Cytoplasmic segment spans residues 211–241 (HKRFKNTYLKKKTSLSVRYALEEISNSSKFT). The chain crosses the membrane as a helical span at residues 242–262 (LILTFTHLVFFGAYTIGSILV). At 263 to 280 (RTLGESFFGNFLNFYVAR) the chain is on the extracellular side. A helical transmembrane segment spans residues 281-301 (GVNCAVPTYNLLIAFVGLISL). Residues 302–345 (RQLNSRRHAKILTKVLIRVTGQEGARNYDDIIMQQWNTVSNRTR) lie on the Cytoplasmic side of the membrane.

The protein belongs to the nematode receptor-like protein srb family. Expressed throughout the head.

The protein localises to the cell membrane. Its subcellular location is the perikaryon. It localises to the cell projection. It is found in the dendrite. G-protein coupled receptor. Plays a role in the navigational capacity of sperm and promotes the targeting of sperm derived from males to the fertilization site in the uterus of hermaphrodites. This chain is Serpentine receptor class beta-5, found in Caenorhabditis elegans.